Consider the following 186-residue polypeptide: Ribosome-recycling factor (186 aa).

This sequence belongs to the RRF family.

The protein resides in the cytoplasm. Its function is as follows. Responsible for the release of ribosomes from messenger RNA at the termination of protein biosynthesis. May increase the efficiency of translation by recycling ribosomes from one round of translation to another. The polypeptide is Ribosome-recycling factor (Leptothrix cholodnii (strain ATCC 51168 / LMG 8142 / SP-6) (Leptothrix discophora (strain SP-6))).